The primary structure comprises 735 residues: Muskelin (735 aa).

At alanine 2 the chain carries N-acetylalanine. Positions 172-204 (REQEAIRLCLKHFRQHNYTEAFESLQKKTKIAL) constitute a LisH domain. In terms of domain architecture, CTLH spans 206 to 258 (HPMLTDMHDKLVLKGDFDACEELIEKAVNDGLFNQYISQQEYKPRWSQIIPKS). Kelch repeat units follow at residues 284-330 (TVYL…SCHK), 339-391 (QIYT…FDHQ), 400-458 (MIYT…SRIG), 469-515 (CLYV…TGFT), 526-578 (EIHV…SLQE), and 597-651 (VHYL…AQMD).

As to quaternary structure, homodimer; may form higher oligomers. Identified in the CTLH complex that contains GID4, RANBP9 and/or RANBP10, MKLN1, MAEA, RMND5A (or alternatively its paralog RMND5B), GID8, ARMC8, WDR26 and YPEL5. Within this complex, MAEA, RMND5A (or alternatively its paralog RMND5B), GID8, WDR26, and RANBP9 and/or RANBP10 form the catalytic core, while GID4, MKLN1, ARMC8 and YPEL5 have ancillary roles. Interacts with RANBP9. Part of a complex consisting of RANBP9, MKLN1 and GID8. Interacts with GABRA1. Interacts with the C-terminal tail of PTGER3.

It is found in the cytoplasm. The protein resides in the cell projection. The protein localises to the ruffle. Its subcellular location is the cell cortex. It localises to the synapse. It is found in the postsynapse. Component of the CTLH E3 ubiquitin-protein ligase complex that selectively accepts ubiquitin from UBE2H and mediates ubiquitination and subsequent proteasomal degradation of the transcription factor HBP1. Required for internalization of the GABA receptor GABRA1 from the cell membrane via endosomes and subsequent GABRA1 degradation. Acts as a mediator of cell spreading and cytoskeletal responses to the extracellular matrix component THBS1. The chain is Muskelin (Mkln1) from Rattus norvegicus (Rat).